The primary structure comprises 335 residues: Tetraacyldisaccharide 4'-kinase (335 aa).

58 to 65 contributes to the ATP binding site; sequence TVGGSGKT.

Belongs to the LpxK family.

The enzyme catalyses a lipid A disaccharide + ATP = a lipid IVA + ADP + H(+). Its pathway is glycolipid biosynthesis; lipid IV(A) biosynthesis; lipid IV(A) from (3R)-3-hydroxytetradecanoyl-[acyl-carrier-protein] and UDP-N-acetyl-alpha-D-glucosamine: step 6/6. Functionally, transfers the gamma-phosphate of ATP to the 4'-position of a tetraacyldisaccharide 1-phosphate intermediate (termed DS-1-P) to form tetraacyldisaccharide 1,4'-bis-phosphate (lipid IVA). This is Tetraacyldisaccharide 4'-kinase from Shewanella oneidensis (strain ATCC 700550 / JCM 31522 / CIP 106686 / LMG 19005 / NCIMB 14063 / MR-1).